Consider the following 351-residue polypeptide: Nicotinate-nucleotide--dimethylbenzimidazole phosphoribosyltransferase (351 aa).

Catalysis depends on E319, which acts as the Proton acceptor.

Belongs to the CobT family.

The catalysed reaction is 5,6-dimethylbenzimidazole + nicotinate beta-D-ribonucleotide = alpha-ribazole 5'-phosphate + nicotinate + H(+). It participates in nucleoside biosynthesis; alpha-ribazole biosynthesis; alpha-ribazole from 5,6-dimethylbenzimidazole: step 1/2. Functionally, catalyzes the synthesis of alpha-ribazole-5'-phosphate from nicotinate mononucleotide (NAMN) and 5,6-dimethylbenzimidazole (DMB). This Desulforamulus reducens (strain ATCC BAA-1160 / DSM 100696 / MI-1) (Desulfotomaculum reducens) protein is Nicotinate-nucleotide--dimethylbenzimidazole phosphoribosyltransferase.